We begin with the raw amino-acid sequence, 206 residues long: Probable glutathione peroxidase 3, mitochondrial (206 aa).

A mitochondrion-targeting transit peptide spans 1 to 12 (MPRSSRWVNQRA). C80 is an active-site residue.

This sequence belongs to the glutathione peroxidase family. Interacts with ABI1 and ABI2. Ubiquitous.

It is found in the mitochondrion. It carries out the reaction 2 glutathione + H2O2 = glutathione disulfide + 2 H2O. With respect to regulation, the redox states are modulated by H(2)O(2). Functionally, may constitute a glutathione peroxidase-like protective system against oxidative stresses. Involved positively in abscisic acid (ABA) signaling pathway that regulates numerous ABA responses, such as stomatal closure, seed germination and inhibition of vegetative growth. Oxidizes and represses target proteins (e.g. the phosphatase activity of ABI1 and ABI2) when oxidized by H(2)O(2), probably after ABA signaling. Modulates the calcium channel activity in guard cells in response to ABA or H(2)O(2). Confers tolerance to drought stress, by enhancing the ABA-dependent stomatal closure. In Arabidopsis thaliana (Mouse-ear cress), this protein is Probable glutathione peroxidase 3, mitochondrial (GPX3).